The following is a 544-amino-acid chain: DNA mismatch repair protein MutL (544 aa).

This sequence belongs to the DNA mismatch repair MutL/HexB family.

In terms of biological role, this protein is involved in the repair of mismatches in DNA. It is required for dam-dependent methyl-directed DNA mismatch repair. May act as a 'molecular matchmaker', a protein that promotes the formation of a stable complex between two or more DNA-binding proteins in an ATP-dependent manner without itself being part of a final effector complex. The sequence is that of DNA mismatch repair protein MutL from Thermodesulfovibrio yellowstonii (strain ATCC 51303 / DSM 11347 / YP87).